A 398-amino-acid chain; its full sequence is Type II secretion system protein L (398 aa).

Over 1 to 248 (MNNHHTSSAA…RQPTPRRWRP (248 aa)) the chain is Cytoplasmic. The chain crosses the membrane as a helical span at residues 249–265 (VIVAALALLLLWSSNCL). Residues 266 to 398 (HDHLMLGQQA…GRLTLEGNDA (133 aa)) are Periplasmic-facing.

It belongs to the GSP L family. As to quaternary structure, type II secretion system is composed of four main components: the outer membrane complex, the inner membrane complex, the cytoplasmic secretion ATPase and the periplasm-spanning pseudopilus. Forms homodimers. Interacts with PulM/GspM. Interacts with PulE/GspE and PulF/GspF.

It is found in the cell inner membrane. Functionally, inner membrane component of the type II secretion system required for the energy-dependent secretion of extracellular factors such as proteases and toxins from the periplasm. Plays a role in the complex assembly and recruits PulM resulting in a stable complex in the inner membrane. Provides thus a link between the energy-providing PulE protein in the cytoplasm and the rest of the T2SS machinery. In Klebsiella pneumoniae, this protein is Type II secretion system protein L (pulL).